We begin with the raw amino-acid sequence, 94 residues long: Small ribosomal subunit protein uS19 (94 aa).

Residues 73–94 are disordered; sequence EFAPTRTYRGHGKDAERTTRRR. Residues 83–94 show a composition bias toward basic and acidic residues; that stretch reads HGKDAERTTRRR.

This sequence belongs to the universal ribosomal protein uS19 family.

Functionally, protein S19 forms a complex with S13 that binds strongly to the 16S ribosomal RNA. This Thermomicrobium roseum (strain ATCC 27502 / DSM 5159 / P-2) protein is Small ribosomal subunit protein uS19.